The chain runs to 292 residues: Syntaxin-19 (292 aa).

Residues 207–269 (LSEIEQRHKE…NNTKEKFGLA (63 aa)) form the t-SNARE coiled-coil homology domain.

Belongs to the syntaxin family. Interacts with EGFR. Expressed in stomach, lung and skin (at protein level). In stomach, strongly expressed in the mucosa of the fundus, in epithelial cells of gastric pits, and in gastric glands (at protein level). In skin, expressed in the epidermis, dermis, and epithelial layer of the hair bulb (at protein level).

It localises to the cell membrane. The protein localises to the cytoplasm. In terms of biological role, plays a role in endosomal trafficking of the epidermal growth factor receptor (EGFR). This Mus musculus (Mouse) protein is Syntaxin-19.